A 737-amino-acid polypeptide reads, in one-letter code: DNA topoisomerase 4 subunit A (737 aa).

The Topo IIA-type catalytic domain maps to Leu-32 to Gln-496. The active-site O-(5'-phospho-DNA)-tyrosine intermediate is Tyr-120.

It belongs to the type II topoisomerase GyrA/ParC subunit family. ParC type 1 subfamily. As to quaternary structure, heterotetramer composed of ParC and ParE.

It localises to the cell membrane. The enzyme catalyses ATP-dependent breakage, passage and rejoining of double-stranded DNA.. In terms of biological role, topoisomerase IV is essential for chromosome segregation. It relaxes supercoiled DNA. Performs the decatenation events required during the replication of a circular DNA molecule. The polypeptide is DNA topoisomerase 4 subunit A (Rickettsia felis (strain ATCC VR-1525 / URRWXCal2) (Rickettsia azadi)).